Reading from the N-terminus, the 378-residue chain is Integrator complex assembly factor WDR73 (378 aa).

WD repeat units follow at residues 73–113 (DFKV…VWQV), 121–163 (KAVS…VVDL), 167–205 (KTTY…LVDT), 214–255 (NRSP…LLDP), 266–305 (QCPV…VYDA), and 322–371 (EPLF…VWDW).

Belongs to the WD repeat WDR73 family. As to quaternary structure, interacts with INTS9 and INTS11; the interaction is direct. Part of the multiprotein complex composed of BRAT1, WDR73, as well as integrator complex subunits INTS9 and INTS11. Expressed in kidney and brain. In the kidney, expressed in glomeruli, most probably in podocytes, and in tubules (at protein level). In the brain, expressed in the cerebellum, with high levels in Purkinje cells and their projecting axons, in the deep cerebellar nuclei and in pyramidal neurons of the cerebral cortex (at protein level). In the white matter, mainly present in astrocytes, but not in oligodendrocytes (at protein level). Also highly expressed in endothelial cells of cerebral capillaries (at protein level).

It is found in the cytoplasm. It localises to the cytoskeleton. The protein resides in the spindle. Its subcellular location is the spindle pole. The protein localises to the cleavage furrow. In terms of biological role, component of a multiprotein complex required for the assembly of the RNA endonuclease module of the integrator complex. Associates with INTS9 and INTS11 in the cytoplasm, stabilizing the INTS9-INTS11 heterodimer and blocking the active site of INTS11. BRAT1 then joins the complex and plugs the active site of INTS11, leading to WDR73 release and nuclear import of INTS9 and INTS11. This is Integrator complex assembly factor WDR73 from Homo sapiens (Human).